We begin with the raw amino-acid sequence, 185 residues long: Ribosome-recycling factor (185 aa).

Belongs to the RRF family.

The protein resides in the cytoplasm. Its function is as follows. Responsible for the release of ribosomes from messenger RNA at the termination of protein biosynthesis. May increase the efficiency of translation by recycling ribosomes from one round of translation to another. In Geotalea daltonii (strain DSM 22248 / JCM 15807 / FRC-32) (Geobacter daltonii), this protein is Ribosome-recycling factor.